Reading from the N-terminus, the 303-residue chain is Shikimate kinase 1, chloroplastic (303 aa).

The transit peptide at 1–66 directs the protein to the chloroplast; the sequence is MEAAITQRIQ…QRRAVSPAVS (66 aa). ATP is bound at residue 109-116; the sequence is GMMGSGKT. Threonine 116 provides a ligand contact to Mg(2+). Substrate contacts are provided by aspartate 134, arginine 159, and glycine 181. Arginine 220 is an ATP binding site.

It belongs to the shikimate kinase family. As to quaternary structure, homodimer. Mg(2+) is required as a cofactor.

Its subcellular location is the plastid. It is found in the chloroplast. The enzyme catalyses shikimate + ATP = 3-phosphoshikimate + ADP + H(+). The protein operates within metabolic intermediate biosynthesis; chorismate biosynthesis; chorismate from D-erythrose 4-phosphate and phosphoenolpyruvate: step 5/7. Catalyzes the specific phosphorylation of the 3-hydroxyl group of shikimic acid using ATP as a cosubstrate. This is Shikimate kinase 1, chloroplastic (SK1) from Arabidopsis thaliana (Mouse-ear cress).